The following is a 142-amino-acid chain: Malate dehydrogenase, mitochondrial (142 aa).

Residues 1–6 (ASGGIG) and Asp-26 each bind NAD(+). Arg-73 and Arg-79 together coordinate substrate. NAD(+) is bound by residues Asn-86 and 109–111 (ITN). Residue Asn-111 participates in substrate binding.

Belongs to the LDH/MDH superfamily. MDH type 1 family. In terms of assembly, homodimer.

It localises to the mitochondrion matrix. It carries out the reaction (S)-malate + NAD(+) = oxaloacetate + NADH + H(+). The protein is Malate dehydrogenase, mitochondrial of Schistosoma mansoni (Blood fluke).